A 160-amino-acid polypeptide reads, in one-letter code: Putative pre-16S rRNA nuclease (160 aa).

The protein belongs to the YqgF nuclease family.

The protein resides in the cytoplasm. In terms of biological role, could be a nuclease involved in processing of the 5'-end of pre-16S rRNA. The protein is Putative pre-16S rRNA nuclease of Cereibacter sphaeroides (strain KD131 / KCTC 12085) (Rhodobacter sphaeroides).